The sequence spans 246 residues: 3'(2'),5'-bisphosphate nucleotidase CysQ (246 aa).

E64, D83, L85, D86, and D205 together coordinate Mg(2+). Position 64 (E64) interacts with substrate. Substrate is bound by residues 85–88 (LDGT) and D205.

This sequence belongs to the inositol monophosphatase superfamily. CysQ family. Mg(2+) serves as cofactor.

The protein resides in the cell inner membrane. The catalysed reaction is adenosine 3',5'-bisphosphate + H2O = AMP + phosphate. Converts adenosine-3',5'-bisphosphate (PAP) to AMP. This Escherichia coli O157:H7 protein is 3'(2'),5'-bisphosphate nucleotidase CysQ.